The chain runs to 556 residues: Formate--tetrahydrofolate ligase (556 aa).

65-72 provides a ligand contact to ATP; sequence TPAGEGKS.

The protein belongs to the formate--tetrahydrofolate ligase family.

It carries out the reaction (6S)-5,6,7,8-tetrahydrofolate + formate + ATP = (6R)-10-formyltetrahydrofolate + ADP + phosphate. It participates in one-carbon metabolism; tetrahydrofolate interconversion. The polypeptide is Formate--tetrahydrofolate ligase (Clostridium botulinum (strain Alaska E43 / Type E3)).